A 480-amino-acid polypeptide reads, in one-letter code: Glutamyl-tRNA(Gln) amidotransferase subunit A (480 aa).

Catalysis depends on charge relay system residues Lys70 and Ser145. Ser169 serves as the catalytic Acyl-ester intermediate.

Belongs to the amidase family. GatA subfamily. As to quaternary structure, heterotrimer of A, B and C subunits.

It catalyses the reaction L-glutamyl-tRNA(Gln) + L-glutamine + ATP + H2O = L-glutaminyl-tRNA(Gln) + L-glutamate + ADP + phosphate + H(+). Its function is as follows. Allows the formation of correctly charged Gln-tRNA(Gln) through the transamidation of misacylated Glu-tRNA(Gln) in organisms which lack glutaminyl-tRNA synthetase. The reaction takes place in the presence of glutamine and ATP through an activated gamma-phospho-Glu-tRNA(Gln). This is Glutamyl-tRNA(Gln) amidotransferase subunit A from Lactobacillus delbrueckii subsp. bulgaricus (strain ATCC 11842 / DSM 20081 / BCRC 10696 / JCM 1002 / NBRC 13953 / NCIMB 11778 / NCTC 12712 / WDCM 00102 / Lb 14).